The primary structure comprises 284 residues: tRNA pseudouridine synthase A (284 aa).

The active-site Nucleophile is aspartate 62. Tyrosine 123 is a substrate binding site.

This sequence belongs to the tRNA pseudouridine synthase TruA family. In terms of assembly, homodimer.

The catalysed reaction is uridine(38/39/40) in tRNA = pseudouridine(38/39/40) in tRNA. In terms of biological role, formation of pseudouridine at positions 38, 39 and 40 in the anticodon stem and loop of transfer RNAs. This Streptomyces griseus subsp. griseus (strain JCM 4626 / CBS 651.72 / NBRC 13350 / KCC S-0626 / ISP 5235) protein is tRNA pseudouridine synthase A.